A 131-amino-acid chain; its full sequence is Small ribosomal subunit protein uS9 (131 aa).

Belongs to the universal ribosomal protein uS9 family.

In Actinobacillus pleuropneumoniae serotype 7 (strain AP76), this protein is Small ribosomal subunit protein uS9.